Reading from the N-terminus, the 314-residue chain is 3'-5' exoribonuclease YhaM (314 aa).

The region spanning 163 to 279 (HVVSMLDLAK…LHYIDNLDAK (117 aa)) is the HD domain.

It belongs to the YhaM family.

Functionally, shows a 3'-5' exoribonuclease activity. This is 3'-5' exoribonuclease YhaM from Bacillus cereus (strain 03BB102).